The sequence spans 227 residues: Cytochrome c oxidase subunit 2 (227 aa).

Topologically, residues 1–14 (MAYPFQLGLQDATS) are mitochondrial intermembrane. A helical transmembrane segment spans residues 15–45 (PIMEELLHFHDHTLMIVFLISSLVLYIISLM). Residues 46 to 59 (LTTKLTHTSTMDAQ) lie on the Mitochondrial matrix side of the membrane. The chain crosses the membrane as a helical span at residues 60–87 (EVETVWTILPAIILILIALPSLRILYMM). The Mitochondrial intermembrane segment spans residues 88 to 227 (DEINNPSLTV…YFETWSALMV (140 aa)). Residues His161, Cys196, Glu198, Cys200, His204, and Met207 each contribute to the Cu cation site. Mg(2+) is bound at residue Glu198. A Phosphotyrosine modification is found at Tyr218.

The protein belongs to the cytochrome c oxidase subunit 2 family. As to quaternary structure, component of the cytochrome c oxidase (complex IV, CIV), a multisubunit enzyme composed of 14 subunits. The complex is composed of a catalytic core of 3 subunits MT-CO1, MT-CO2 and MT-CO3, encoded in the mitochondrial DNA, and 11 supernumerary subunits COX4I, COX5A, COX5B, COX6A, COX6B, COX6C, COX7A, COX7B, COX7C, COX8 and NDUFA4, which are encoded in the nuclear genome. The complex exists as a monomer or a dimer and forms supercomplexes (SCs) in the inner mitochondrial membrane with NADH-ubiquinone oxidoreductase (complex I, CI) and ubiquinol-cytochrome c oxidoreductase (cytochrome b-c1 complex, complex III, CIII), resulting in different assemblies (supercomplex SCI(1)III(2)IV(1) and megacomplex MCI(2)III(2)IV(2)). Found in a complex with TMEM177, COA6, COX18, COX20, SCO1 and SCO2. Interacts with TMEM177 in a COX20-dependent manner. Interacts with COX20. Interacts with COX16. Cu cation is required as a cofactor.

The protein resides in the mitochondrion inner membrane. The catalysed reaction is 4 Fe(II)-[cytochrome c] + O2 + 8 H(+)(in) = 4 Fe(III)-[cytochrome c] + 2 H2O + 4 H(+)(out). Component of the cytochrome c oxidase, the last enzyme in the mitochondrial electron transport chain which drives oxidative phosphorylation. The respiratory chain contains 3 multisubunit complexes succinate dehydrogenase (complex II, CII), ubiquinol-cytochrome c oxidoreductase (cytochrome b-c1 complex, complex III, CIII) and cytochrome c oxidase (complex IV, CIV), that cooperate to transfer electrons derived from NADH and succinate to molecular oxygen, creating an electrochemical gradient over the inner membrane that drives transmembrane transport and the ATP synthase. Cytochrome c oxidase is the component of the respiratory chain that catalyzes the reduction of oxygen to water. Electrons originating from reduced cytochrome c in the intermembrane space (IMS) are transferred via the dinuclear copper A center (CU(A)) of subunit 2 and heme A of subunit 1 to the active site in subunit 1, a binuclear center (BNC) formed by heme A3 and copper B (CU(B)). The BNC reduces molecular oxygen to 2 water molecules using 4 electrons from cytochrome c in the IMS and 4 protons from the mitochondrial matrix. This is Cytochrome c oxidase subunit 2 (MT-CO2) from Canis lupus familiaris (Dog).